Consider the following 233-residue polypeptide: uncharacterized protein (233 aa).

The next 6 helical transmembrane spans lie at 7 to 27 (VPIF…LLAY), 36 to 56 (YEFE…ILIP), 62 to 82 (MFVL…KYLA), 119 to 139 (LIIA…AILM), 159 to 179 (PLYP…VGLV), and 188 to 208 (ILLA…APHI).

The protein localises to the cell membrane. This is an uncharacterized protein from Methanocaldococcus jannaschii (strain ATCC 43067 / DSM 2661 / JAL-1 / JCM 10045 / NBRC 100440) (Methanococcus jannaschii).